The chain runs to 545 residues: Methionine--tRNA ligase (545 aa).

The 'HIGH' region signature appears at Pro13 to His23. 4 residues coordinate Zn(2+): Cys144, Cys147, Cys157, and Cys160. The short motif at Lys329 to Ser333 is the 'KMSKS' region element. Lys332 contacts ATP.

Belongs to the class-I aminoacyl-tRNA synthetase family. MetG type 1 subfamily. In terms of assembly, monomer. The cofactor is Zn(2+).

It is found in the cytoplasm. The enzyme catalyses tRNA(Met) + L-methionine + ATP = L-methionyl-tRNA(Met) + AMP + diphosphate. Its function is as follows. Is required not only for elongation of protein synthesis but also for the initiation of all mRNA translation through initiator tRNA(fMet) aminoacylation. In Vesicomyosocius okutanii subsp. Calyptogena okutanii (strain HA), this protein is Methionine--tRNA ligase.